We begin with the raw amino-acid sequence, 601 residues long: CDPK-related kinase 5 (601 aa).

Over residues 1–19 the composition is skewed to polar residues; that stretch reads MGLCTSKPNSSNSDQTPAR. Disordered stretches follow at residues 1 to 55 and 70 to 98; these read MGLC…KSPF and KKTP…PPPS. Residue Gly-2 is the site of N-myristoyl glycine attachment. The span at 26 to 35 shows a compositional bias: low complexity; that stretch reads SESVKPSSSS. Residues 36–48 show a composition bias toward polar residues; that stretch reads VNGEDQCVTTTNN. One can recognise a Protein kinase domain in the interval 148 to 410; sequence YELGDEVGRG…AAQALSHPWI (263 aa). Residues 154–162 and Lys-180 contribute to the ATP site; that span reads VGRGHFGYT. Asp-276 functions as the Proton acceptor in the catalytic mechanism. Ser-316 is subject to Phosphoserine. An autoinhibitory domain region spans residues 415–445; the sequence is DAKVPMDILVFKLMRAYLRSSSLRKAALRAL. The calmodulin binding (CaMBD) stretch occupies residues 434–454; the sequence is SSSLRKAALRALSKTLTVDEL. EF-hand domains are found at residues 452 to 488, 489 to 524, 525 to 564, and 567 to 596; these read DELF…ATDA, MKDS…VHQL, EALD…GPSV, and HAVL…VSSR. Positions 467, 469, 471, 476, 508, 513, 546, 553, 578, and 580 each coordinate Ca(2+). Phosphoserine is present on Ser-582.

Belongs to the protein kinase superfamily. Ser/Thr protein kinase family. CDPK subfamily. In terms of assembly, binds calmodulin (CaM) in a calcium-dependent manner.

It is found in the membrane. The catalysed reaction is L-seryl-[protein] + ATP = O-phospho-L-seryl-[protein] + ADP + H(+). It catalyses the reaction L-threonyl-[protein] + ATP = O-phospho-L-threonyl-[protein] + ADP + H(+). Activated by calcium and calmodulin. Autophosphorylation may play an important role in the regulation of the kinase activity. May play a role in signal transduction pathways that involve calcium as a second messenger. This chain is CDPK-related kinase 5 (CRK5), found in Arabidopsis thaliana (Mouse-ear cress).